Here is a 354-residue protein sequence, read N- to C-terminus: Alkanal monooxygenase alpha chain (354 aa).

This sequence belongs to the bacterial luciferase oxidoreductase family. Heterodimer of an alpha and a beta chain.

It catalyses the reaction a long-chain fatty aldehyde + FMNH2 + O2 = a long-chain fatty acid + hnu + FMN + H2O + 2 H(+). Functionally, light-emitting reaction in luminous bacteria. The sequence is that of Alkanal monooxygenase alpha chain (luxA) from Aliivibrio fischeri (Vibrio fischeri).